A 428-amino-acid polypeptide reads, in one-letter code: Serine--tRNA ligase (428 aa).

An L-serine-binding site is contributed by 231–233 (TAE). 262–264 (RSE) serves as a coordination point for ATP. Position 285 (Glu-285) interacts with L-serine. Residue 349 to 352 (EISS) participates in ATP binding. Residue Ser-385 participates in L-serine binding.

It belongs to the class-II aminoacyl-tRNA synthetase family. Type-1 seryl-tRNA synthetase subfamily. Homodimer. The tRNA molecule binds across the dimer.

The protein resides in the cytoplasm. The catalysed reaction is tRNA(Ser) + L-serine + ATP = L-seryl-tRNA(Ser) + AMP + diphosphate + H(+). It carries out the reaction tRNA(Sec) + L-serine + ATP = L-seryl-tRNA(Sec) + AMP + diphosphate + H(+). The protein operates within aminoacyl-tRNA biosynthesis; selenocysteinyl-tRNA(Sec) biosynthesis; L-seryl-tRNA(Sec) from L-serine and tRNA(Sec): step 1/1. Functionally, catalyzes the attachment of serine to tRNA(Ser). Is also able to aminoacylate tRNA(Sec) with serine, to form the misacylated tRNA L-seryl-tRNA(Sec), which will be further converted into selenocysteinyl-tRNA(Sec). This chain is Serine--tRNA ligase, found in Staphylococcus aureus (strain USA300).